The chain runs to 319 residues: Malate dehydrogenase (319 aa).

NAD(+)-binding positions include 10-15 (GAGNIG) and Asp-34. Residues Arg-83 and Arg-89 each coordinate substrate. Residues Asn-96 and 119-121 (ITN) each bind NAD(+). Substrate-binding residues include Asn-121 and Arg-152. His-176 (proton acceptor) is an active-site residue.

This sequence belongs to the LDH/MDH superfamily. MDH type 3 family.

The enzyme catalyses (S)-malate + NAD(+) = oxaloacetate + NADH + H(+). Catalyzes the reversible oxidation of malate to oxaloacetate. The chain is Malate dehydrogenase from Francisella philomiragia subsp. philomiragia (strain ATCC 25017 / CCUG 19701 / FSC 153 / O#319-036).